The following is a 729-amino-acid chain: Leucine-rich repeat flightless-interacting protein 2 (729 aa).

Positions 27-69 (IAREAEARLAAKRAARAEARDIRMRELERQQKELTHRYHDKKW) form a coiled coil. Disordered regions lie at residues 80–156 (DHAR…SSSH), 230–268 (SARS…ESAA), and 289–344 (IPDL…CSLD). A compositionally biased stretch (basic residues) spans 84-93 (HLQRSSHRHS). The span at 99–110 (VTPNHRSSSVDV) shows a compositional bias: polar residues. The segment covering 115–126 (RGRESISRRRDS) has biased composition (basic and acidic residues). Composition is skewed to low complexity over residues 137-147 (RTSNSYSNSYD) and 257-268 (SSDFSDQSESAA). The segment covering 304-320 (TTENYSRPSSRNATSGI) has biased composition (polar residues). Coiled-coil stretches lie at residues 357-531 (DLKD…IGEK) and 574-722 (LDVR…KANR). Positions 600–621 (DDERQKSAKNNSTTTDPTGLEN) are disordered. Positions 607 to 616 (AKNNSTTTDP) are enriched in polar residues.

Belongs to the LRRFIP family.

May function as activator of the canonical Wnt signaling pathway upstream of ctnnb1/beta-catenin. Might be required for dorsal axis formation. This Xenopus laevis (African clawed frog) protein is Leucine-rich repeat flightless-interacting protein 2 (lrrfip2).